The following is a 139-amino-acid chain: Ribulose bisphosphate carboxylase small subunit (139 aa).

Belongs to the RuBisCO small chain family. Heterohexadecamer of 8 large and 8 small subunits.

It localises to the plastid. The protein resides in the chloroplast. In terms of biological role, ruBisCO catalyzes two reactions: the carboxylation of D-ribulose 1,5-bisphosphate, the primary event in carbon dioxide fixation, as well as the oxidative fragmentation of the pentose substrate in the photorespiration process. Both reactions occur simultaneously and in competition at the same active site. Although the small subunit is not catalytic it is essential for maximal activity. The protein is Ribulose bisphosphate carboxylase small subunit of Detonula confervacea (Marine diatom).